The following is a 265-amino-acid chain: 3-methyl-2-oxobutanoate hydroxymethyltransferase (265 aa).

Mg(2+) contacts are provided by Asp-43 and Asp-82. 3-methyl-2-oxobutanoate contacts are provided by residues 43–44 (DS), Asp-82, and Lys-111. Residue Glu-113 coordinates Mg(2+). Glu-180 (proton acceptor) is an active-site residue.

It belongs to the PanB family. As to quaternary structure, homodecamer; pentamer of dimers. The cofactor is Mg(2+).

It localises to the cytoplasm. The enzyme catalyses 3-methyl-2-oxobutanoate + (6R)-5,10-methylene-5,6,7,8-tetrahydrofolate + H2O = 2-dehydropantoate + (6S)-5,6,7,8-tetrahydrofolate. The protein operates within cofactor biosynthesis; (R)-pantothenate biosynthesis; (R)-pantoate from 3-methyl-2-oxobutanoate: step 1/2. In terms of biological role, catalyzes the reversible reaction in which hydroxymethyl group from 5,10-methylenetetrahydrofolate is transferred onto alpha-ketoisovalerate to form ketopantoate. The chain is 3-methyl-2-oxobutanoate hydroxymethyltransferase from Francisella tularensis subsp. novicida (strain U112).